The primary structure comprises 186 residues: Inosine/xanthosine triphosphatase (186 aa).

Glutamine 75 lines the Mg(2+) pocket.

The protein belongs to the YjjX NTPase family. In terms of assembly, homodimer. It depends on Mg(2+) as a cofactor. Requires Mn(2+) as cofactor.

The catalysed reaction is XTP + H2O = XDP + phosphate + H(+). It catalyses the reaction ITP + H2O = IDP + phosphate + H(+). Functionally, phosphatase that hydrolyzes non-canonical purine nucleotides such as XTP and ITP to their respective diphosphate derivatives. Probably excludes non-canonical purines from DNA/RNA precursor pool, thus preventing their incorporation into DNA/RNA and avoiding chromosomal lesions. This chain is Inosine/xanthosine triphosphatase, found in Shewanella baltica (strain OS195).